A 597-amino-acid chain; its full sequence is Elongation factor 4 (597 aa).

Positions 2 to 184 (KHIRNFSIIA…NIVSAIPAPE (183 aa)) constitute a tr-type G domain. GTP contacts are provided by residues 14 to 19 (DHGKST) and 131 to 134 (NKID).

It belongs to the TRAFAC class translation factor GTPase superfamily. Classic translation factor GTPase family. LepA subfamily.

Its subcellular location is the cell inner membrane. It carries out the reaction GTP + H2O = GDP + phosphate + H(+). Its function is as follows. Required for accurate and efficient protein synthesis under certain stress conditions. May act as a fidelity factor of the translation reaction, by catalyzing a one-codon backward translocation of tRNAs on improperly translocated ribosomes. Back-translocation proceeds from a post-translocation (POST) complex to a pre-translocation (PRE) complex, thus giving elongation factor G a second chance to translocate the tRNAs correctly. Binds to ribosomes in a GTP-dependent manner. The polypeptide is Elongation factor 4 (Vibrio parahaemolyticus serotype O3:K6 (strain RIMD 2210633)).